The chain runs to 552 residues: uncharacterized protein (552 aa).

Residues 8-200 (KLFAEMIIQG…LAIVYAGFLK (193 aa)) enclose the DhaL domain.

This is an uncharacterized protein from Staphylococcus saprophyticus subsp. saprophyticus (strain ATCC 15305 / DSM 20229 / NCIMB 8711 / NCTC 7292 / S-41).